A 264-amino-acid chain; its full sequence is Apolipoprotein A-I (264 aa).

Residues 1–18 (MKAVVLAVALVFLTGSQA) form the signal peptide. 2 tandem repeats follow at residues 67–88 (LNLL…ERLG) and 89–110 (PLTR…QEMN). Residues 67–264 (LNLLENWDTL…DKASETLTAQ (198 aa)) form a 10 X approximate tandem repeats region. Residue Met109 is modified to Methionine sulfoxide. The 3; half-length repeat unit spans residues 111-121 (KDLEEVKQKVQ). 3 tandem repeats follow at residues 122-143 (PYLD…QKVA), 144-165 (PLGA…GRLS), and 166-187 (PVAE…TQLA). The stretch at 188-207 (PHSEQMRESLAQRLAELKSN) is one 7; truncated repeat. A Methionine sulfoxide modification is found at Met193. Residues 208-229 (PTLNEYHTRAKTHLKTLGEKAR) form repeat 8. A 9; half-length repeat occupies 230-240 (PALEDLRHSLM). 2 positions are modified to methionine sulfoxide: Met240 and Met242. The stretch at 241–264 (PMLETLKTQVQSVIDKASETLTAQ) is repeat 10.

Belongs to the apolipoprotein A1/A4/E family. As to quaternary structure, homodimer. Interacts with APOA1BP and CLU. Component of a sperm activating protein complex (SPAP), consisting of APOA1, an immunoglobulin heavy chain, an immunoglobulin light chain and albumin. Interacts with NDRG1. Interacts with SCGB3A2. Interacts with NAXE and YJEFN3. In terms of processing, glycosylated. Post-translationally, palmitoylated. May be acylated. In terms of processing, phosphorylation sites are present in the extracellular medium. As to expression, major protein of plasma HDL, also found in chylomicrons.

It is found in the secreted. In terms of biological role, participates in the reverse transport of cholesterol from tissues to the liver for excretion by promoting cholesterol efflux from tissues and by acting as a cofactor for the lecithin cholesterol acyltransferase (LCAT). As part of the SPAP complex, activates spermatozoa motility. The sequence is that of Apolipoprotein A-I (Apoa1) from Mus musculus (Mouse).